We begin with the raw amino-acid sequence, 320 residues long: Aspartate carbamoyltransferase catalytic subunit (320 aa).

Carbamoyl phosphate-binding residues include Arg-58 and Thr-59. An L-aspartate-binding site is contributed by Lys-86. Residues Arg-108, His-136, and Gln-139 each contribute to the carbamoyl phosphate site. Residues Arg-169 and Arg-223 each coordinate L-aspartate. Carbamoyl phosphate contacts are provided by Gly-264 and Pro-265.

The protein belongs to the aspartate/ornithine carbamoyltransferase superfamily. ATCase family. Heterododecamer (2C3:3R2) of six catalytic PyrB chains organized as two trimers (C3), and six regulatory PyrI chains organized as three dimers (R2).

It catalyses the reaction carbamoyl phosphate + L-aspartate = N-carbamoyl-L-aspartate + phosphate + H(+). The protein operates within pyrimidine metabolism; UMP biosynthesis via de novo pathway; (S)-dihydroorotate from bicarbonate: step 2/3. Its function is as follows. Catalyzes the condensation of carbamoyl phosphate and aspartate to form carbamoyl aspartate and inorganic phosphate, the committed step in the de novo pyrimidine nucleotide biosynthesis pathway. The protein is Aspartate carbamoyltransferase catalytic subunit of Cereibacter sphaeroides (strain ATCC 17029 / ATH 2.4.9) (Rhodobacter sphaeroides).